Consider the following 429-residue polypeptide: Maltoporin 2 (429 aa).

A signal peptide spans 1-25; sequence MMITLRKLPLAVAVAAGVMSAQALA. Positions 397-412 are enriched in polar residues; that stretch reads GLQTKDSSGSGAFTSS. The tract at residues 397–416 is disordered; the sequence is GLQTKDSSGSGAFTSSRGDD.

Belongs to the porin LamB (TC 1.B.3) family. In terms of assembly, homotrimer formed of three 18-stranded antiparallel beta-barrels, containing three independent channels.

The protein resides in the cell outer membrane. The enzyme catalyses beta-maltose(in) = beta-maltose(out). Functionally, involved in the transport of maltose and maltodextrins. The chain is Maltoporin 2 from Klebsiella pneumoniae subsp. pneumoniae (strain ATCC 700721 / MGH 78578).